The chain runs to 158 residues: C-type lectin lectoxin-Enh7 (158 aa).

The signal sequence occupies residues methionine 1 to glycine 23. 3 disulfide bridges follow: cysteine 26–cysteine 37, cysteine 54–cysteine 154, and cysteine 129–cysteine 146. The 123-residue stretch at arginine 33–glutamine 155 folds into the C-type lectin domain. Residues glutamate 119–asparagine 121 carry the Mannose-binding motif. Ca(2+) is bound by residues glutamate 127, asparagine 142, and aspartate 143.

Belongs to the true venom lectin family. As to expression, expressed by the venom gland.

The protein resides in the secreted. Functionally, mannose-binding lectin which recognizes specific carbohydrate structures and agglutinates a variety of animal cells by binding to cell-surface glycoproteins and glycolipids. May be a calcium-dependent lectin. The polypeptide is C-type lectin lectoxin-Enh7 (Pseudoferania polylepis (Macleay's water snake)).